We begin with the raw amino-acid sequence, 451 residues long: D-inositol 3-phosphate glycosyltransferase (451 aa).

Histidine 37 contacts 1D-myo-inositol 3-phosphate. UDP-N-acetyl-alpha-D-glucosamine contacts are provided by residues 43-44 and glycine 51; that span reads QP. 1D-myo-inositol 3-phosphate-binding positions include 48–53, lysine 106, tyrosine 138, threonine 162, and arginine 182; that span reads DAGGMN. The UDP-N-acetyl-alpha-D-glucosamine site is built by arginine 259, lysine 264, and arginine 323. Mg(2+)-binding residues include tyrosine 332, arginine 333, and alanine 335. UDP-N-acetyl-alpha-D-glucosamine-binding residues include glutamate 345 and glutamate 353. Position 359 (threonine 359) interacts with Mg(2+).

Belongs to the glycosyltransferase group 1 family. MshA subfamily. Homodimer.

It carries out the reaction 1D-myo-inositol 3-phosphate + UDP-N-acetyl-alpha-D-glucosamine = 1D-myo-inositol 2-acetamido-2-deoxy-alpha-D-glucopyranoside 3-phosphate + UDP + H(+). Catalyzes the transfer of a N-acetyl-glucosamine moiety to 1D-myo-inositol 3-phosphate to produce 1D-myo-inositol 2-acetamido-2-deoxy-glucopyranoside 3-phosphate in the mycothiol biosynthesis pathway. The protein is D-inositol 3-phosphate glycosyltransferase of Corynebacterium kroppenstedtii (strain DSM 44385 / JCM 11950 / CIP 105744 / CCUG 35717).